A 416-amino-acid polypeptide reads, in one-letter code: Solute carrier family 25 member 46 (416 aa).

Over residues 1-13 the composition is skewed to basic and acidic residues; it reads MQPRRPDRFDGLE. The interval 1–91 is disordered; it reads MQPRRPDRFD…GEESSSSSSG (91 aa). Residues 37 to 49 are compositionally biased toward polar residues; it reads SFSSSGDLSQHWV. Residues 82-91 are compositionally biased toward low complexity; it reads GEESSSSSSG. Residues 94 to 185 form a Solcar 1 repeat; sequence HLNRFAGFGI…GMLSEFTHLP (92 aa). The next 6 helical transmembrane spans lie at 101 to 121, 161 to 181, 197 to 217, 256 to 276, 312 to 332, and 381 to 401; these read FGIG…CIVL, MGST…LSEF, IGGH…FYSA, LLPL…HYII, FPEL…LYPL, and LGFY…AIVL. Residues 309–414 form a Solcar 2 repeat; it reads EDYFPELIAN…KIIYSSVVQT (106 aa).

The protein belongs to the mitochondrial carrier (TC 2.A.29) family.

Its subcellular location is the mitochondrion outer membrane. Its function is as follows. May play a role in mitochondrial dynamics by controlling mitochondrial membrane fission. The protein is Solute carrier family 25 member 46 (slc25a46) of Xenopus tropicalis (Western clawed frog).